We begin with the raw amino-acid sequence, 122 residues long: Small ribosomal subunit protein uS13 (122 aa).

The disordered stretch occupies residues glycine 95–lysine 122.

The protein belongs to the universal ribosomal protein uS13 family. As to quaternary structure, part of the 30S ribosomal subunit. Forms a loose heterodimer with protein S19. Forms two bridges to the 50S subunit in the 70S ribosome.

In terms of biological role, located at the top of the head of the 30S subunit, it contacts several helices of the 16S rRNA. In the 70S ribosome it contacts the 23S rRNA (bridge B1a) and protein L5 of the 50S subunit (bridge B1b), connecting the 2 subunits; these bridges are implicated in subunit movement. Contacts the tRNAs in the A and P-sites. In Agathobacter rectalis (strain ATCC 33656 / DSM 3377 / JCM 17463 / KCTC 5835 / VPI 0990) (Eubacterium rectale), this protein is Small ribosomal subunit protein uS13.